Consider the following 477-residue polypeptide: Ribulose bisphosphate carboxylase large chain (477 aa).

A propeptide spanning residues 1 to 2 (MS) is cleaved from the precursor. Pro-3 bears the N-acetylproline mark. N6,N6,N6-trimethyllysine is present on Lys-14. Thr-173 contributes to the substrate binding site. Catalysis depends on Lys-175, which acts as the Proton acceptor. Lys-177 contributes to the substrate binding site. Positions 201, 203, and 204 each coordinate Mg(2+). At Lys-201 the chain carries N6-carboxylysine. His-294 functions as the Proton acceptor in the catalytic mechanism. Residues Arg-295, His-327, and Ser-379 each coordinate substrate.

This sequence belongs to the RuBisCO large chain family. Type I subfamily. As to quaternary structure, heterohexadecamer of 8 large chains and 8 small chains; disulfide-linked. The disulfide link is formed within the large subunit homodimers. The cofactor is Mg(2+). The disulfide bond which can form in the large chain dimeric partners within the hexadecamer appears to be associated with oxidative stress and protein turnover.

The protein resides in the plastid. The protein localises to the chloroplast. It carries out the reaction 2 (2R)-3-phosphoglycerate + 2 H(+) = D-ribulose 1,5-bisphosphate + CO2 + H2O. The enzyme catalyses D-ribulose 1,5-bisphosphate + O2 = 2-phosphoglycolate + (2R)-3-phosphoglycerate + 2 H(+). Functionally, ruBisCO catalyzes two reactions: the carboxylation of D-ribulose 1,5-bisphosphate, the primary event in carbon dioxide fixation, as well as the oxidative fragmentation of the pentose substrate in the photorespiration process. Both reactions occur simultaneously and in competition at the same active site. The sequence is that of Ribulose bisphosphate carboxylase large chain from Gerbera jamesonii (Transvaal daisy).